Reading from the N-terminus, the 28-residue chain is Morintide mO6 (28 aa).

The Chitin-binding type-1 domain maps to 1-28 (NGLCCSQYGFCGTTSAYCSRANGCQSNC). Cystine bridges form between Cys-4–Cys-18 and Cys-24–Cys-28.

Seeds (at protein level).

In terms of biological role, chitin-binding protein which functions in defense against chitin-containing fungal pathogens. This Moringa oleifera (Horseradish tree) protein is Morintide mO6.